The chain runs to 409 residues: Serine/threonine transporter SstT (409 aa).

The next 9 helical transmembrane spans lie at 14–34 (GSLV…ATLS), 48–68 (FVGA…AASI), 82–102 (IVIL…LMSF), 141–161 (ALMT…GLAL), 192–212 (IGIF…AIAG), 216–236 (LLLV…PAIV), 290–310 (IPLG…ILTL), 322–342 (ILTA…ASGV), and 357–377 (FGIS…IGVI).

Belongs to the dicarboxylate/amino acid:cation symporter (DAACS) (TC 2.A.23) family.

The protein localises to the cell inner membrane. The enzyme catalyses L-serine(in) + Na(+)(in) = L-serine(out) + Na(+)(out). It catalyses the reaction L-threonine(in) + Na(+)(in) = L-threonine(out) + Na(+)(out). Its function is as follows. Involved in the import of serine and threonine into the cell, with the concomitant import of sodium (symport system). The protein is Serine/threonine transporter SstT of Shewanella woodyi (strain ATCC 51908 / MS32).